A 212-amino-acid polypeptide reads, in one-letter code: Ribonuclease HII (212 aa).

Residues 17 to 211 (ANLAGIDEAG…VIEALLSLEQ (195 aa)) form the RNase H type-2 domain. A divalent metal cation is bound by residues Asp-23, Glu-24, and Asp-120.

Belongs to the RNase HII family. Requires Mn(2+) as cofactor. Mg(2+) serves as cofactor.

The protein localises to the cytoplasm. The enzyme catalyses Endonucleolytic cleavage to 5'-phosphomonoester.. Its function is as follows. Endonuclease that specifically degrades the RNA of RNA-DNA hybrids. This is Ribonuclease HII from Chloroflexus aurantiacus (strain ATCC 29364 / DSM 637 / Y-400-fl).